A 122-amino-acid polypeptide reads, in one-letter code: MIQMQTNLEVADNSGARRVQCIKVLGGAGRRFASVGDIIVVSVKEAIPRGRVKKGDVHRAVIVRTAKEIRREDGSCIRFDRNAAVLINKQGEPIGTRIFGPVTRELRAKKYMKIISLAPEVL.

Belongs to the universal ribosomal protein uL14 family. In terms of assembly, part of the 50S ribosomal subunit. Forms a cluster with proteins L3 and L19. In the 70S ribosome, L14 and L19 interact and together make contacts with the 16S rRNA in bridges B5 and B8.

Binds to 23S rRNA. Forms part of two intersubunit bridges in the 70S ribosome. This is Large ribosomal subunit protein uL14 from Rhodospirillum centenum (strain ATCC 51521 / SW).